The following is a 617-amino-acid chain: UvrABC system protein C (617 aa).

In terms of domain architecture, GIY-YIG spans 12–91 (EKPGVYLMKD…IKKYKPKYNV (80 aa)). The 36-residue stretch at 203–238 (EWLVEKLKEEMQKAADELRFEEAARLRDQIFAIEKI) folds into the UVR domain.

It belongs to the UvrC family. Interacts with UvrB in an incision complex.

The protein localises to the cytoplasm. The UvrABC repair system catalyzes the recognition and processing of DNA lesions. UvrC both incises the 5' and 3' sides of the lesion. The N-terminal half is responsible for the 3' incision and the C-terminal half is responsible for the 5' incision. The chain is UvrABC system protein C from Caldanaerobacter subterraneus subsp. tengcongensis (strain DSM 15242 / JCM 11007 / NBRC 100824 / MB4) (Thermoanaerobacter tengcongensis).